The sequence spans 319 residues: Acetyl-coenzyme A carboxylase carboxyl transferase subunit alpha (319 aa).

Positions 35 to 296 (NIDEEVHRLR…KAQLLADLAD (262 aa)) constitute a CoA carboxyltransferase C-terminal domain.

The protein belongs to the AccA family. As to quaternary structure, acetyl-CoA carboxylase is a heterohexamer composed of biotin carboxyl carrier protein (AccB), biotin carboxylase (AccC) and two subunits each of ACCase subunit alpha (AccA) and ACCase subunit beta (AccD).

It is found in the cytoplasm. It carries out the reaction N(6)-carboxybiotinyl-L-lysyl-[protein] + acetyl-CoA = N(6)-biotinyl-L-lysyl-[protein] + malonyl-CoA. The protein operates within lipid metabolism; malonyl-CoA biosynthesis; malonyl-CoA from acetyl-CoA: step 1/1. Its function is as follows. Component of the acetyl coenzyme A carboxylase (ACC) complex. First, biotin carboxylase catalyzes the carboxylation of biotin on its carrier protein (BCCP) and then the CO(2) group is transferred by the carboxyltransferase to acetyl-CoA to form malonyl-CoA. The polypeptide is Acetyl-coenzyme A carboxylase carboxyl transferase subunit alpha (Klebsiella pneumoniae (strain 342)).